A 422-amino-acid polypeptide reads, in one-letter code: Probable cell wall mannoprotein PIR32 (422 aa).

The signal sequence occupies residues 1–21; it reads MIHYLIFPILLIFFQIIKSSG. Disordered stretches follow at residues 116–143 and 155–313; these read DGQVQKMKHKHDYSSGGGDDDDDDEDCF and DYQD…EGYE. The segment covering 133-143 has biased composition (acidic residues); it reads GDDDDDDEDCF. Over residues 158 to 169 the composition is skewed to polar residues; the sequence is DMNTQEQANEDS. Residues 179–214 are a coiled coil; that stretch reads HQQVVDQNQQINEEEEETQEQQMQEENNNTNEIEDN. Low complexity-rich tracts occupy residues 180–189 and 198–209; these read QQVVDQNQQI and EQQMQEENNNTN. The N-linked (GlcNAc...) asparagine glycan is linked to Asn-206. Acidic residues predominate over residues 220-231; the sequence is ETIEEIYDDIDN. Asn-232 and Asn-237 each carry an N-linked (GlcNAc...) asparagine glycan. Residues 238 to 248 are compositionally biased toward basic residues; sequence NSKKYHKKRPH. Composition is skewed to basic and acidic residues over residues 249–284 and 300–311; these read NNYENKHGHKDYHEDHHHNHRYKDHENGHEEDDHKW and QEQKPKHEKSEG. A glycan (N-linked (GlcNAc...) asparagine) is linked at Asn-328.

This sequence belongs to the PIR protein family. In terms of processing, O-glycosylated. Extensively O-mannosylated.

It is found in the secreted. It localises to the cell wall. Functionally, probable structural component of the cell wall involved in cell wall integrity and virulence. The protein is Probable cell wall mannoprotein PIR32 (PIR32) of Candida albicans (strain SC5314 / ATCC MYA-2876) (Yeast).